A 510-amino-acid polypeptide reads, in one-letter code: NAD(P)H-quinone oxidoreductase subunit 2 A, chloroplastic (510 aa).

The next 13 membrane-spanning stretches (helical) occupy residues 24-44, 57-77, 99-119, 124-144, 149-169, 183-203, 229-249, 295-315, 323-343, 354-374, 395-415, 418-438, and 484-504; these read LLLF…GLIL, IPWL…ALLF, IFQF…VEYI, MAIT…MFLC, LITI…LSGY, YLLM…WLYG, ISIA…PAPF, WHLL…LIAI, MLAY…IVGD, YMLF…LFGL, ALSS…AGFF, LYLF…IGLL, and MILC…IIAI.

The protein belongs to the complex I subunit 2 family. As to quaternary structure, NDH is composed of at least 16 different subunits, 5 of which are encoded in the nucleus.

The protein resides in the plastid. Its subcellular location is the chloroplast thylakoid membrane. It catalyses the reaction a plastoquinone + NADH + (n+1) H(+)(in) = a plastoquinol + NAD(+) + n H(+)(out). The enzyme catalyses a plastoquinone + NADPH + (n+1) H(+)(in) = a plastoquinol + NADP(+) + n H(+)(out). NDH shuttles electrons from NAD(P)H:plastoquinone, via FMN and iron-sulfur (Fe-S) centers, to quinones in the photosynthetic chain and possibly in a chloroplast respiratory chain. The immediate electron acceptor for the enzyme in this species is believed to be plastoquinone. Couples the redox reaction to proton translocation, and thus conserves the redox energy in a proton gradient. The chain is NAD(P)H-quinone oxidoreductase subunit 2 A, chloroplastic from Piper cenocladum (Ant piper).